We begin with the raw amino-acid sequence, 858 residues long: Translation initiation factor IF-2 (858 aa).

The interval 59–147 is disordered; that stretch reads KEHAEKRRER…GKKLEGQERK (89 aa). A tr-type G domain is found at 361 to 530; it reads PRPPVVVVMG…LLVADLLELK (170 aa). The interval 370-377 is G1; it reads GHVDHGKT. 370–377 is a binding site for GTP; sequence GHVDHGKT. The interval 395–399 is G2; sequence GITQH. Positions 416–419 are G3; the sequence is DTPG. GTP is bound by residues 416 to 420 and 470 to 473; these read DTPGH and NKID. The interval 470–473 is G4; sequence NKID. A G5 region spans residues 506-508; sequence SAK.

This sequence belongs to the TRAFAC class translation factor GTPase superfamily. Classic translation factor GTPase family. IF-2 subfamily.

The protein resides in the cytoplasm. In terms of biological role, one of the essential components for the initiation of protein synthesis. Protects formylmethionyl-tRNA from spontaneous hydrolysis and promotes its binding to the 30S ribosomal subunits. Also involved in the hydrolysis of GTP during the formation of the 70S ribosomal complex. The sequence is that of Translation initiation factor IF-2 from Caldicellulosiruptor saccharolyticus (strain ATCC 43494 / DSM 8903 / Tp8T 6331).